Consider the following 428-residue polypeptide: tRNA modification GTPase MnmE (428 aa).

The (6S)-5-formyl-5,6,7,8-tetrahydrofolate site is built by arginine 20, glutamate 77, and lysine 117. A TrmE-type G domain is found at 213 to 351 (GFEVAIIGPP…LVQRISDVLK (139 aa)). Asparagine 223 serves as a coordination point for K(+). GTP is bound by residues 223–228 (NAGKST), 242–248 (SEVAGTT), and 267–270 (DTAG). Serine 227 lines the Mg(2+) pocket. Serine 242, valine 244, and threonine 247 together coordinate K(+). Threonine 248 is a binding site for Mg(2+). A (6S)-5-formyl-5,6,7,8-tetrahydrofolate-binding site is contributed by lysine 428.

Belongs to the TRAFAC class TrmE-Era-EngA-EngB-Septin-like GTPase superfamily. TrmE GTPase family. As to quaternary structure, homodimer. Heterotetramer of two MnmE and two MnmG subunits. The cofactor is K(+).

It is found in the cytoplasm. Its function is as follows. Exhibits a very high intrinsic GTPase hydrolysis rate. Involved in the addition of a carboxymethylaminomethyl (cmnm) group at the wobble position (U34) of certain tRNAs, forming tRNA-cmnm(5)s(2)U34. The polypeptide is tRNA modification GTPase MnmE (Ruegeria pomeroyi (strain ATCC 700808 / DSM 15171 / DSS-3) (Silicibacter pomeroyi)).